The primary structure comprises 402 residues: Deoxyguanosinetriphosphate triphosphohydrolase-like protein (402 aa).

The HD domain occupies 73–217; sequence RLTHTIEVAQ…AAIADDIAYN (145 aa).

This sequence belongs to the dGTPase family. Type 2 subfamily.

In Brucella anthropi (strain ATCC 49188 / DSM 6882 / CCUG 24695 / JCM 21032 / LMG 3331 / NBRC 15819 / NCTC 12168 / Alc 37) (Ochrobactrum anthropi), this protein is Deoxyguanosinetriphosphate triphosphohydrolase-like protein.